The sequence spans 559 residues: Glucose-6-phosphate isomerase 2 (559 aa).

The active-site Proton donor is the glutamate 367. Catalysis depends on residues histidine 398 and lysine 522.

This sequence belongs to the GPI family.

It localises to the cytoplasm. The enzyme catalyses alpha-D-glucose 6-phosphate = beta-D-fructose 6-phosphate. It functions in the pathway carbohydrate biosynthesis; gluconeogenesis. The protein operates within carbohydrate degradation; glycolysis; D-glyceraldehyde 3-phosphate and glycerone phosphate from D-glucose: step 2/4. Functionally, catalyzes the reversible isomerization of glucose-6-phosphate to fructose-6-phosphate. The polypeptide is Glucose-6-phosphate isomerase 2 (Chromohalobacter salexigens (strain ATCC BAA-138 / DSM 3043 / CIP 106854 / NCIMB 13768 / 1H11)).